A 95-amino-acid polypeptide reads, in one-letter code: Co-chaperonin GroES (95 aa).

This sequence belongs to the GroES chaperonin family. Heptamer of 7 subunits arranged in a ring. Interacts with the chaperonin GroEL.

The protein localises to the cytoplasm. Together with the chaperonin GroEL, plays an essential role in assisting protein folding. The GroEL-GroES system forms a nano-cage that allows encapsulation of the non-native substrate proteins and provides a physical environment optimized to promote and accelerate protein folding. GroES binds to the apical surface of the GroEL ring, thereby capping the opening of the GroEL channel. This is Co-chaperonin GroES from Chlorobium limicola (strain DSM 245 / NBRC 103803 / 6330).